Here is a 577-residue protein sequence, read N- to C-terminus: Zinc finger-containing ubiquitin peptidase 1 (577 aa).

A C2H2-type 1 zinc finger spans residues 2–24 (LSCDICGETVTSEPDRKAHLIVH). The C2H2-type 2; atypical zinc-finger motif lies at 29–52 (IICPFCKLSGINYNEMCFHIETAH). C2H2-type zinc fingers lie at residues 153–176 (PECP…KTKH) and 192–214 (YDCP…VDLH). Residues 225 to 247 (DRVQCSSDRELAHQLQQEEERKR) are MIU. Positions 231-261 (SDRELAHQLQQEEERKRKSEESRQEREEFQK) are enriched in basic and acidic residues. Residues 231-262 (SDRELAHQLQQEEERKRKSEESRQEREEFQKL) are disordered. The interval 248-273 (KSEESRQEREEFQKLQRQYGLDNSGG) is zUBD/ZHA. N6-acetyllysine is present on Lys261. The active-site Nucleophile is Cys359. Residue His490 is the Proton acceptor of the active site. Asp511 is a catalytic residue.

The protein belongs to the peptidase C78 family. ZUFSP subfamily. Interacts with RPA1 and RPA2.

The protein localises to the cytoplasm. It is found in the nucleus. The enzyme catalyses Thiol-dependent hydrolysis of ester, thioester, amide, peptide and isopeptide bonds formed by the C-terminal Gly of ubiquitin (a 76-residue protein attached to proteins as an intracellular targeting signal).. Its function is as follows. Deubiquitinase with endodeubiquitinase activity that specifically interacts with and cleaves 'Lys-63'-linked long polyubiquitin chains. Shows only weak activity against 'Lys-11' and 'Lys-48'-linked chains. Plays an important role in genome stability pathways, functioning to prevent spontaneous DNA damage and also promote cellular survival in response to exogenous DNA damage. Modulates the ubiquitination status of replication protein A (RPA) complex proteins in response to replication stress. In Rattus norvegicus (Rat), this protein is Zinc finger-containing ubiquitin peptidase 1.